We begin with the raw amino-acid sequence, 683 residues long: UvrABC system protein B (683 aa).

Residues M1 to D29 form a disordered region. Residues A39 to E417 form the Helicase ATP-binding domain. An ATP-binding site is contributed by G52–T59. The short motif at Y105–I128 is the Beta-hairpin element. Residues Q442 to S604 enclose the Helicase C-terminal domain. Basic and acidic residues predominate over residues E587–V603. The segment at E587 to D620 is disordered. The segment covering S604–T615 has biased composition (polar residues). One can recognise a UVR domain in the interval E630 to T665.

It belongs to the UvrB family. In terms of assembly, forms a heterotetramer with UvrA during the search for lesions. Interacts with UvrC in an incision complex.

It localises to the cytoplasm. Functionally, the UvrABC repair system catalyzes the recognition and processing of DNA lesions. A damage recognition complex composed of 2 UvrA and 2 UvrB subunits scans DNA for abnormalities. Upon binding of the UvrA(2)B(2) complex to a putative damaged site, the DNA wraps around one UvrB monomer. DNA wrap is dependent on ATP binding by UvrB and probably causes local melting of the DNA helix, facilitating insertion of UvrB beta-hairpin between the DNA strands. Then UvrB probes one DNA strand for the presence of a lesion. If a lesion is found the UvrA subunits dissociate and the UvrB-DNA preincision complex is formed. This complex is subsequently bound by UvrC and the second UvrB is released. If no lesion is found, the DNA wraps around the other UvrB subunit that will check the other stand for damage. This Natronomonas pharaonis (strain ATCC 35678 / DSM 2160 / CIP 103997 / JCM 8858 / NBRC 14720 / NCIMB 2260 / Gabara) (Halobacterium pharaonis) protein is UvrABC system protein B.